The primary structure comprises 833 residues: Probable serine/threonine-protein kinase DDB_G0277165 (833 aa).

One can recognise a Protein kinase domain in the interval 9 to 262 (FIIGKTLGQG…IKEIKEHPWF (254 aa)). Residues 15-23 (LGQGTTGKV) and Lys-38 each bind ATP. Asp-133 (proton acceptor) is an active-site residue. Positions 288 to 329 (QIDEDIFRSLMALGVGTIDEVKQQLVSNQKSATLIYYRLLEE) constitute a UBA domain. Positions 338-351 (NKYGYKPKETRRNS) are enriched in basic and acidic residues. 3 disordered regions span residues 338-472 (NKYG…ISPS), 528-626 (QALQ…PIEI), and 764-799 (FINP…GGQN). Composition is skewed to low complexity over residues 365-432 (NNNN…NNNN) and 441-459 (SSSQ…QIPS). The span at 460-472 (NSTSQESMQISPS) shows a compositional bias: polar residues. The span at 528 to 589 (QALQQHHQQQ…SSTSTSPQLS (62 aa)) shows a compositional bias: low complexity. Residues 600–625 (GSMTASTNPATSPTMSHRGKTSSPIE) are compositionally biased toward polar residues.

This sequence belongs to the protein kinase superfamily. CAMK Ser/Thr protein kinase family.

The enzyme catalyses L-seryl-[protein] + ATP = O-phospho-L-seryl-[protein] + ADP + H(+). The catalysed reaction is L-threonyl-[protein] + ATP = O-phospho-L-threonyl-[protein] + ADP + H(+). The sequence is that of Probable serine/threonine-protein kinase DDB_G0277165 from Dictyostelium discoideum (Social amoeba).